Reading from the N-terminus, the 147-residue chain is Hemoglobin subunit gamma-1 (147 aa).

Glycine 2 bears the N-acetylglycine; in form Hb F1 mark. In terms of domain architecture, Globin spans 3 to 147 (HFTEEDKATI…VASALSSRYH (145 aa)). Threonine 13 is subject to Phosphothreonine. Serine 45, serine 51, and serine 53 each carry phosphoserine. Lysine 60 bears the N6-acetyllysine mark. Residue histidine 64 coordinates heme b. At lysine 83 the chain carries N6-acetyllysine. Histidine 93 contacts heme b. An S-nitrosocysteine modification is found at cysteine 94. Serine 140 is subject to Phosphoserine.

This sequence belongs to the globin family. Heterotetramer of two alpha chains and two gamma chains in fetal hemoglobin (Hb F). In the case of deletions affecting one or more of the alpha chains, the excess gamma chains form homotetramers that exhibit neither Bohr effect nor heme-heme cooperativity (hemoglobin Bart's). Acetylation of Gly-2 converts Hb F to the minor Hb F1. In terms of tissue distribution, red blood cells.

In terms of biological role, gamma chains make up the fetal hemoglobin F, in combination with alpha chains. The protein is Hemoglobin subunit gamma-1 (HBG1) of Homo sapiens (Human).